Consider the following 162-residue polypeptide: Retinoic acid receptor responder protein 2 (162 aa).

The N-terminal stretch at 1–20 (MWQLLLPLALGLGTMGLGRA) is a signal peptide. Cystine bridges form between cysteine 77/cysteine 87, cysteine 98/cysteine 117, and cysteine 101/cysteine 135. The propeptide occupies 156 to 162 (FIKALSP).

Secreted in an inactive precursor form, prochemerin, which is proteolytically processed by a variety of extracellular proteases to generate forms with differing levels of bioactivity. For example, the removal of five amino acids results in chemerin-157, which exhibits the highest activity, while removal of six amino acids results in chemerin-156 which has slightly less activity. Some proteases are able to cleave at more than one site and chemerin forms may be sequentially processed by different enzymes to modulate activity levels. The coordinated expression and activity of chemerin-modifying enzymes is essential for regulating its bioactivation, inactivation and, consequently, biological function. Cathepsin G cleaves six C-terminal amino acids from prochemerin (chemerin-156), elastase is able to cleave five (chemerin-157), seven (chemerin-155) or ten (chemerin-152), plasmin cleaves four amino acids (chemerin-158), and tryptase cleaves four (chemerin-158) or seven (chemerin-155). Multiple cleavages might be required to fully activate chemerin, with an initial tryptase cleavage resulting in chemerin with low activity (chemerin-158), and a second cleavage by carboxypeptidase N or B producing highly active chemerin (chemerin-157).

Its subcellular location is the secreted. Adipocyte-secreted protein (adipokine) that regulates adipogenesis, metabolism and inflammation through activation of the chemokine-like receptor 1 (CMKLR1). Also acts as a ligand for CMKLR2. Can also bind to C-C chemokine receptor-like 2 (CCRL2), but with a lower affinity than it does to CMKLR1 or CMKLR2. Positively regulates adipocyte differentiation, modulates the expression of adipocyte genes involved in lipid and glucose metabolism and might play a role in angiogenesis, a process essential for the expansion of white adipose tissue. Also acts as a pro-inflammatory adipokine, causing an increase in secretion of pro-inflammatory and prodiabetic adipokines, which further impair adipose tissue metabolic function and have negative systemic effects including impaired insulin sensitivity, altered glucose and lipid metabolism, and a decrease in vascular function in other tissues. Can have both pro- and anti-inflammatory properties depending on the modality of enzymatic cleavage by different classes of proteases. Acts as a chemotactic factor for leukocyte populations expressing CMKLR1, particularly immature plasmacytoid dendritic cells, but also immature myeloid DCs, macrophages and natural killer cells. Exerts an anti-inflammatory role by preventing TNF/TNFA-induced VCAM1 expression and monocytes adhesion in vascular endothelial cells. The effect is mediated via inhibiting activation of NF-kappa-B and CRK/p38 through stimulation of AKT1/NOS3 signaling and nitric oxide production. Exhibits an antimicrobial function in the skin. This chain is Retinoic acid receptor responder protein 2 (RARRES2), found in Bos taurus (Bovine).